The sequence spans 75 residues: UPF0181 protein ETA_15280 (75 aa).

This sequence belongs to the UPF0181 family.

This is UPF0181 protein ETA_15280 from Erwinia tasmaniensis (strain DSM 17950 / CFBP 7177 / CIP 109463 / NCPPB 4357 / Et1/99).